Reading from the N-terminus, the 289-residue chain is Thiazole synthase (289 aa).

The active-site Schiff-base intermediate with DXP is Lys132. Residues Gly193, 219–220 (AG), and 241–242 (NT) contribute to the 1-deoxy-D-xylulose 5-phosphate site.

The protein belongs to the ThiG family. As to quaternary structure, homotetramer. Forms heterodimers with either ThiH or ThiS.

Its subcellular location is the cytoplasm. It catalyses the reaction [ThiS sulfur-carrier protein]-C-terminal-Gly-aminoethanethioate + 2-iminoacetate + 1-deoxy-D-xylulose 5-phosphate = [ThiS sulfur-carrier protein]-C-terminal Gly-Gly + 2-[(2R,5Z)-2-carboxy-4-methylthiazol-5(2H)-ylidene]ethyl phosphate + 2 H2O + H(+). Its pathway is cofactor biosynthesis; thiamine diphosphate biosynthesis. In terms of biological role, catalyzes the rearrangement of 1-deoxy-D-xylulose 5-phosphate (DXP) to produce the thiazole phosphate moiety of thiamine. Sulfur is provided by the thiocarboxylate moiety of the carrier protein ThiS. In vitro, sulfur can be provided by H(2)S. This is Thiazole synthase from Rhodospirillum rubrum (strain ATCC 11170 / ATH 1.1.1 / DSM 467 / LMG 4362 / NCIMB 8255 / S1).